Consider the following 583-residue polypeptide: Pectinesterase/pectinesterase inhibitor U1 (583 aa).

The signal sequence occupies residues 1–40 (MTRVEDFFSKQIDFCKRKKKIYLAIVASVLLVAAVIGVVA). A pectinesterase inhibitor U1 region spans residues 60–221 (SSAHAIVKSA…EKMCSNALAM (162 aa)). N85, N105, and N224 each carry an N-linked (GlcNAc...) asparagine glycan. Positions 272 to 570 (DVVVAADGSG…TPGRFIAGGS (299 aa)) are pectinesterase U1. Substrate is bound by residues T347 and Q377. The active-site Proton donor; for pectinesterase activity is D400. Cysteines 414 and 434 form a disulfide. D421 functions as the Nucleophile; for pectinesterase activity in the catalytic mechanism. The substrate site is built by R489 and W491.

The protein in the N-terminal section; belongs to the PMEI family. It in the C-terminal section; belongs to the pectinesterase family.

It is found in the secreted. The protein resides in the cell wall. It catalyses the reaction [(1-&gt;4)-alpha-D-galacturonosyl methyl ester](n) + n H2O = [(1-&gt;4)-alpha-D-galacturonosyl](n) + n methanol + n H(+). It participates in glycan metabolism; pectin degradation; 2-dehydro-3-deoxy-D-gluconate from pectin: step 1/5. Its function is as follows. Acts in the modification of cell walls via demethylesterification of cell wall pectin. This is Pectinesterase/pectinesterase inhibitor U1 (PMEU1) from Solanum lycopersicum (Tomato).